The sequence spans 343 residues: Anthranilate phosphoribosyltransferase (343 aa).

Residues Gly81, 84–85, 91–94, 109–117, and Ser121 contribute to the 5-phospho-alpha-D-ribose 1-diphosphate site; these read GD, NLST, and KHGNRSVSS. An anthranilate-binding site is contributed by Gly81. Mg(2+) is bound at residue Ser93. Asn112 is an anthranilate binding site. Position 167 (Arg167) interacts with anthranilate. Positions 226 and 227 each coordinate Mg(2+).

This sequence belongs to the anthranilate phosphoribosyltransferase family. As to quaternary structure, homodimer. Requires Mg(2+) as cofactor.

It carries out the reaction N-(5-phospho-beta-D-ribosyl)anthranilate + diphosphate = 5-phospho-alpha-D-ribose 1-diphosphate + anthranilate. The protein operates within amino-acid biosynthesis; L-tryptophan biosynthesis; L-tryptophan from chorismate: step 2/5. In terms of biological role, catalyzes the transfer of the phosphoribosyl group of 5-phosphorylribose-1-pyrophosphate (PRPP) to anthranilate to yield N-(5'-phosphoribosyl)-anthranilate (PRA). The polypeptide is Anthranilate phosphoribosyltransferase (Cellvibrio japonicus (strain Ueda107) (Pseudomonas fluorescens subsp. cellulosa)).